Reading from the N-terminus, the 505-residue chain is 2,3-bisphosphoglycerate-independent phosphoglycerate mutase (505 aa).

Mn(2+) contacts are provided by Asp-13 and Ser-63. Residue Ser-63 is the Phosphoserine intermediate of the active site. Residues His-124, 153 to 154 (RD), Arg-183, Arg-189, 254 to 257 (RADR), and Lys-330 each bind substrate. 5 residues coordinate Mn(2+): Asp-396, His-400, Asp-437, His-438, and His-456.

Belongs to the BPG-independent phosphoglycerate mutase family. As to quaternary structure, monomer. The cofactor is Mn(2+).

The catalysed reaction is (2R)-2-phosphoglycerate = (2R)-3-phosphoglycerate. Its pathway is carbohydrate degradation; glycolysis; pyruvate from D-glyceraldehyde 3-phosphate: step 3/5. Its function is as follows. Catalyzes the interconversion of 2-phosphoglycerate and 3-phosphoglycerate. The sequence is that of 2,3-bisphosphoglycerate-independent phosphoglycerate mutase from Ruegeria pomeroyi (strain ATCC 700808 / DSM 15171 / DSS-3) (Silicibacter pomeroyi).